Consider the following 146-residue polypeptide: Large ribosomal subunit protein uL15 (146 aa).

2 stretches are compositionally biased toward basic residues: residues 1–13 (MIRK…RMRG) and 22–38 (SKKR…GQAG). A disordered region spans residues 1–38 (MIRKRRKITRMRGSRTVGGGCSKKRRGAGHRGGRGQAG).

This sequence belongs to the universal ribosomal protein uL15 family. Part of the 50S ribosomal subunit.

Its function is as follows. Binds to the 23S rRNA. This is Large ribosomal subunit protein uL15 from Methanothermobacter thermautotrophicus (strain ATCC 29096 / DSM 1053 / JCM 10044 / NBRC 100330 / Delta H) (Methanobacterium thermoautotrophicum).